The primary structure comprises 952 residues: MTKETHENHLRTHNGIFPVSLLSTQARQLLNFKLKSPSYYLLNSFKLLVKSEGNNQSTTADVTLTKSPNAYHASSAREEKDLQVSRRDTCFYCSRKIIKCICNEEHVGIESVQLKLILLLCQNLPNVTTNAKKYFSSLADGHNFTLTLYKFSLDNQTFSQLLSRFKSFATLTELLQVHNVMLQVNFSFQARQLNTEIQLRRCHSLEKTWKFLFGDYELPDVLKDMESSNSDWSDTSLKRIAYLCSLVEELKLHSSIMNDKYVCLVSKHNNALEDKFNSEAARQLLQKSLSIVASNLKQAENKTISYEEKLSIAQNSINEIQTQNRDLKLETEKLQDQIKALLERNQSLQEALETVKNDEKNLREMNANYETEMKEARQKLNNKEALISHYDDDFRAKELKISRLSESLREKAGLLEFQSSVSEQRDLLYQEQIQSSIKDMENVFRKNEYLMEELNELKNNLEVESSKVLRLDEEMKCLKDEQLSQFDTVFSLTDERDGLQKDLKNTKGNLDDEIGRSAFLKSQIRDQELTIEKLHDSLETLSQTNNSLQCEISEKNAELNSVNSKLSEGRAHLETANKENEILKQQLELSESKLASLLNSYQSFINKKEHLYSFLQLVEPSFAKSDSSNATESQISESVRKGISIFNLLFIVYKNVCSQAGINPSTKLEDLDEHTLSDELTYITKKFVQKDQEYQTKEIELRNYKITLQSLLEDKLIGVNTDCRSPSCSDFEQLGQESENNTSISGRVSKLVKSFNDSSSISNNTKISITKSPSGEKVSVFKEMSDIALRDMDKNRKLLGENVDVRNIVVQKDESLNIDLQNNAVVPELHFKEGMVYDSLENAYTYLAESKRMLANELQMKQEDLEKVILELEAYKEIFLEEKQIPCEEFMPGKNAKSEKSLRSVFQEQLMRETKRVRKLEKVNSELKLHCFELSERLREREHTLQQTFGDK.

3 coiled-coil regions span residues 283–611 (QLLQ…KEHL), 684–716 (TKKF…EDKL), and 839–942 (SLEN…RERE).

It localises to the cytoplasm. In terms of biological role, has a role in meiosis. This is Meiotic coiled-coil protein 3 (mcp3) from Schizosaccharomyces pombe (strain 972 / ATCC 24843) (Fission yeast).